The sequence spans 322 residues: FAD-dependent monooxygenase subE (322 aa).

4 residues coordinate FAD: Glu35, Gly49, Arg108, and Asp313.

This sequence belongs to the paxM FAD-dependent monooxygenase family. FAD serves as cofactor.

It participates in secondary metabolite biosynthesis; terpenoid biosynthesis. Its function is as follows. FAD-dependent monooxygenase; part of the gene cluster that mediates the biosynthesis of the immunosuppressants subglutinols, meroterpenoids consisting of an alpha-pyrone (4-hydroxy-5,6-dimethyl-2-pyrone) moiety attached to a decalin core fused to a five-membered cyclic ether carrying a prenylside chain. The first step of the pathway is the synthesis of the alpha-pyrone moiety by the polyketide synthase subA via condensation of one acetyl-CoA starter unit with 3 malonyl-CoA units and 2 methylations. The alpha-pyrone is then combined with geranylgeranyl pyrophosphate (GGPP) formed by the GGPP synthase subD through the action of the prenyltransferase subC to yield a linear alpha-pyrone diterpenoid. Subsequent steps in the subglutinol biosynthetic pathway involve the decalin core formation, which is thought to be initiated by the epoxidation of the C10-C11 olefin by the FAD-dependent oxidoreductase subE. The following cyclization cascade would be catalyzed by the terpene cyclase subB. Lastly, the FAD-dependent dehydrogenase subF probably catalyzes the five-membered cyclic ether formation to complete the formation of subglutinol A. Subsequent redox reactions appear to give rise to subglutinol C and D, however, it remains unclear which enzymes are responsible for these transformations. SubD may have secondary function in the conversion of the identified subglutinols to subglutinol analog 45, which seems to be the major product of the cluster. This chain is FAD-dependent monooxygenase subE, found in Metarhizium robertsii (strain ARSEF 23 / ATCC MYA-3075) (Metarhizium anisopliae (strain ARSEF 23)).